Here is a 225-residue protein sequence, read N- to C-terminus: Phosphoribosylformylglycinamidine synthase subunit PurQ (225 aa).

The 221-residue stretch at 5–225 folds into the Glutamine amidotransferase type-1 domain; it reads RFGIVVFPGS…WQSIVQSLAG (221 aa). The active-site Nucleophile is cysteine 89. Active-site residues include histidine 198 and glutamate 200.

Part of the FGAM synthase complex composed of 1 PurL, 1 PurQ and 2 PurS subunits.

Its subcellular location is the cytoplasm. It catalyses the reaction N(2)-formyl-N(1)-(5-phospho-beta-D-ribosyl)glycinamide + L-glutamine + ATP + H2O = 2-formamido-N(1)-(5-O-phospho-beta-D-ribosyl)acetamidine + L-glutamate + ADP + phosphate + H(+). The enzyme catalyses L-glutamine + H2O = L-glutamate + NH4(+). It functions in the pathway purine metabolism; IMP biosynthesis via de novo pathway; 5-amino-1-(5-phospho-D-ribosyl)imidazole from N(2)-formyl-N(1)-(5-phospho-D-ribosyl)glycinamide: step 1/2. Its function is as follows. Part of the phosphoribosylformylglycinamidine synthase complex involved in the purines biosynthetic pathway. Catalyzes the ATP-dependent conversion of formylglycinamide ribonucleotide (FGAR) and glutamine to yield formylglycinamidine ribonucleotide (FGAM) and glutamate. The FGAM synthase complex is composed of three subunits. PurQ produces an ammonia molecule by converting glutamine to glutamate. PurL transfers the ammonia molecule to FGAR to form FGAM in an ATP-dependent manner. PurS interacts with PurQ and PurL and is thought to assist in the transfer of the ammonia molecule from PurQ to PurL. The sequence is that of Phosphoribosylformylglycinamidine synthase subunit PurQ from Synechococcus sp. (strain JA-3-3Ab) (Cyanobacteria bacterium Yellowstone A-Prime).